We begin with the raw amino-acid sequence, 127 residues long: Modulator protein MzrA (127 aa).

At 1-10 the chain is on the cytoplasmic side; it reads MGLQNMTLRR. The helical transmembrane segment at 11–31 threads the bilayer; it reads FTLSMSALLLLCALLWLWAAL. Over 32 to 127 the chain is Periplasmic; that stretch reads EQQESSLAIR…RLRDAPHRLG (96 aa).

This sequence belongs to the MzrA family. In terms of assembly, interacts with EnvZ.

The protein localises to the cell inner membrane. Its function is as follows. Modulates the activity of the EnvZ/OmpR two-component regulatory system, probably by directly modulating EnvZ enzymatic activity and increasing stability of phosphorylated OmpR. This is Modulator protein MzrA from Enterobacter lignolyticus (strain SCF1).